A 142-amino-acid chain; its full sequence is Large ribosomal subunit protein uL11 (142 aa).

Residues 84 to 103 (AGVKSGSGRPNSDKVGTVTD) form a disordered region.

This sequence belongs to the universal ribosomal protein uL11 family. In terms of assembly, part of the ribosomal stalk of the 50S ribosomal subunit. Interacts with L10 and the large rRNA to form the base of the stalk. L10 forms an elongated spine to which L12 dimers bind in a sequential fashion forming a multimeric L10(L12)X complex. One or more lysine residues are methylated.

Functionally, forms part of the ribosomal stalk which helps the ribosome interact with GTP-bound translation factors. This Aliivibrio salmonicida (strain LFI1238) (Vibrio salmonicida (strain LFI1238)) protein is Large ribosomal subunit protein uL11.